A 245-amino-acid chain; its full sequence is Tetraspanin-6 (245 aa).

The Cytoplasmic portion of the chain corresponds to 1–19; it reads MASPSRRLQTKPVITCFKS. The chain crosses the membrane as a helical span at residues 20–40; it reads VLLIYTFIFWITGVILLAVGI. The Extracellular segment spans residues 41-59; that stretch reads WGKVSLENYFSLLNEKATN. A helical membrane pass occupies residues 60–80; the sequence is VPFVLIATGTVIILLGTFGCF. The Cytoplasmic portion of the chain corresponds to 81 to 93; the sequence is ATCRASAWMLKLY. Residues 94–114 form a helical membrane-spanning segment; the sequence is AMFLTLVFLVELVAAIVGFVF. The Extracellular segment spans residues 115 to 208; the sequence is RHEIKNSFKN…IKVMTIIESE (94 aa). The N-linked (GlcNAc...) asparagine glycan is linked to N134. The helical transmembrane segment at 209–229 threads the bilayer; the sequence is MGVVAGISFGVACFQLIGIFL. The Cytoplasmic segment spans residues 230–245; sequence AYCLSRAITNNQYEIV.

This sequence belongs to the tetraspanin (TM4SF) family.

It localises to the membrane. The polypeptide is Tetraspanin-6 (TSPAN6) (Homo sapiens (Human)).